Reading from the N-terminus, the 85-residue chain is Antitoxin VapB31 (85 aa).

Its function is as follows. Antitoxin component of a type II toxin-antitoxin (TA) system. Upon expression in M.smegmatis neutralizes the effect of cognate toxin VapC31. This chain is Antitoxin VapB31 (vapB31), found in Mycobacterium tuberculosis (strain ATCC 25618 / H37Rv).